We begin with the raw amino-acid sequence, 126 residues long: Profilin-1B (126 aa).

Residues 2–36 (SWQTYVDTNLVGTGAVTQAAILGLDGNTWATSAGF) form an actin binding region. Lys-104 carries the N6,N6,N6-trimethyllysine modification.

It belongs to the profilin family. In terms of assembly, occurs in many kinds of cells as a complex with monomeric actin in a 1:1 ratio.

It localises to the cytoplasm. Its subcellular location is the cytoskeleton. Functionally, binds to actin and affects the structure of the cytoskeleton. At high concentrations, profilin prevents the polymerization of actin, whereas it enhances it at low concentrations. By binding to PIP2, it inhibits the formation of IP3 and DG. This is Profilin-1B from Acanthamoeba castellanii (Amoeba).